Consider the following 210-residue polypeptide: Two-component response regulator ORR7 (210 aa).

The interval 53 to 92 (VVPLHDNASAEDDDDDEEDDDEDDDDDDDEDDEEEAAPPY) is disordered. The segment covering 61–88 (SAEDDDDDEEDDDEDDDDDDDEDDEEEA) has biased composition (acidic residues). Positions 92 to 205 (YVMAVDDSSV…VRPADISRIT (114 aa)) constitute a Response regulatory domain. The residue at position 142 (Asp-142) is a 4-aspartylphosphate.

Belongs to the ARR family. Type-A subfamily. In terms of processing, two-component system major event consists of a His-to-Asp phosphorelay between a sensor histidine kinase (HK) and a response regulator (RR). In plants, the His-to-Asp phosphorelay involves an additional intermediate named Histidine-containing phosphotransfer protein (HPt). This multistep phosphorelay consists of a His-Asp-His-Asp sequential transfer of a phosphate group between first a His and an Asp of the HK protein, followed by the transfer to a conserved His of the HPt protein and finally the transfer to an Asp in the receiver domain of the RR protein.

Functionally, functions as a response regulator involved in His-to-Asp phosphorelay signal transduction system. Phosphorylation of the Asp residue in the receiver domain activates the ability of the protein to promote the transcription of target genes. Type-A response regulators seem to act as negative regulators of the cytokinin signaling. In Oryza sativa subsp. japonica (Rice), this protein is Two-component response regulator ORR7.